Here is a 153-residue protein sequence, read N- to C-terminus: UPF0260 protein YcgN (153 aa).

Belongs to the UPF0260 family.

The sequence is that of UPF0260 protein YcgN from Shigella flexneri serotype 5b (strain 8401).